Here is a 203-residue protein sequence, read N- to C-terminus: Tegument protein UL51 homolog (203 aa).

C4 carries the S-palmitoyl cysteine; by host lipid modification.

It belongs to the herpesviridae UL51 family. In terms of assembly, oligomerizes. Interacts with U75; this interaction mediates U75 incorporation to virions. Post-translationally, phosphorylated. Palmitoylation is necessary for Golgi localization.

It is found in the virion tegument. Its subcellular location is the host cytoplasm. The protein localises to the host Golgi apparatus. Its function is as follows. Plays several roles during the time course of infection, including egress of virus particles from the perinuclear space and secondary envelopment of cytoplasmic capsids that bud into specific trans-Golgi network (TGN)-derived membranes. The sequence is that of Tegument protein UL51 homolog (U44) from Homo sapiens (Human).